The sequence spans 307 residues: GTPase Era (307 aa).

The region spanning 17 to 186 is the Era-type G domain; that stretch reads RCGFVAIVGR…LELIKPYLPE (170 aa). Residues 25-32 are G1; it reads GRPNVGKS. A GTP-binding site is contributed by 25–32; sequence GRPNVGKS. Residues 51 to 55 are G2; that stretch reads QTTRN. Residues 72–75 form a G3 region; that stretch reads DTPG. Residues 72 to 76 and 133 to 136 each bind GTP; these read DTPGF and NKID. A G4 region spans residues 133 to 136; sequence NKID. Positions 165–167 are G5; sequence VSA. The 77-residue stretch at 217–293 folds into the KH type-2 domain; the sequence is LGEELPYAMN…FLKVWVKVKS (77 aa).

Belongs to the TRAFAC class TrmE-Era-EngA-EngB-Septin-like GTPase superfamily. Era GTPase family. As to quaternary structure, monomer.

The protein resides in the cytoplasm. It localises to the cell inner membrane. Functionally, an essential GTPase that binds both GDP and GTP, with rapid nucleotide exchange. Plays a role in 16S rRNA processing and 30S ribosomal subunit biogenesis and possibly also in cell cycle regulation and energy metabolism. This chain is GTPase Era, found in Neisseria meningitidis serogroup B (strain ATCC BAA-335 / MC58).